The primary structure comprises 156 residues: ATP synthase subunit b 2 (156 aa).

A helical transmembrane segment spans residues 11–31 (LLAFIFFVWFCMKFVWPPIMG).

It belongs to the ATPase B chain family. In terms of assembly, F-type ATPases have 2 components, F(1) - the catalytic core - and F(0) - the membrane proton channel. F(1) has five subunits: alpha(3), beta(3), gamma(1), delta(1), epsilon(1). F(0) has three main subunits: a(1), b(2) and c(10-14). The alpha and beta chains form an alternating ring which encloses part of the gamma chain. F(1) is attached to F(0) by a central stalk formed by the gamma and epsilon chains, while a peripheral stalk is formed by the delta and b chains.

The protein localises to the cell inner membrane. In terms of biological role, f(1)F(0) ATP synthase produces ATP from ADP in the presence of a proton or sodium gradient. F-type ATPases consist of two structural domains, F(1) containing the extramembraneous catalytic core and F(0) containing the membrane proton channel, linked together by a central stalk and a peripheral stalk. During catalysis, ATP synthesis in the catalytic domain of F(1) is coupled via a rotary mechanism of the central stalk subunits to proton translocation. Its function is as follows. Component of the F(0) channel, it forms part of the peripheral stalk, linking F(1) to F(0). The chain is ATP synthase subunit b 2 from Pseudoalteromonas atlantica (strain T6c / ATCC BAA-1087).